The primary structure comprises 210 residues: MRLNVNPTRMELTRLKKQLTTATRGHKLLKDKQDELMRQFILLIRKNNELRQAIEKETQTAMKDFVLAKSTVEEAFIDELLALPAENVSISVVEKNIMSVKVPLMNFQYDETLNETPLEYGYLHSNAELDRSIDGFTQLLPKLLKLAEVEKTCQLMAEEIEKTRRRVNALEYMTIPQLEETIYYIKMKLEENERAEVTRLIKVKNMGTEE.

This sequence belongs to the V-ATPase D subunit family.

Involved in ATP-driven sodium extrusion. The sequence is that of V-type sodium ATPase subunit D (ntpD) from Enterococcus hirae (strain ATCC 9790 / DSM 20160 / JCM 8729 / LMG 6399 / NBRC 3181 / NCIMB 6459 / NCDO 1258 / NCTC 12367 / WDCM 00089 / R).